We begin with the raw amino-acid sequence, 159 residues long: MAQVKRLLINYKTLEEFKQFKEYGIQELSMLEDLESNMIENDSNSPFYGIYFGDKLVARMSLYQVDGSTTTYFNHNHDYLELWKLEVLPGYQRKGYGEALVEFAKSFGLPIRTNPRVKSAGFWDKMGFESVKYDMERDKGENPLIWEPAHIQKNTGESA.

The N-acetyltransferase domain occupies 7–151; the sequence is LLINYKTLEE…NPLIWEPAHI (145 aa).

This is an uncharacterized protein from Bacillus pumilus (strain SAFR-032).